The sequence spans 356 residues: Histidinol-phosphate aminotransferase (356 aa).

K208 carries the N6-(pyridoxal phosphate)lysine modification.

Belongs to the class-II pyridoxal-phosphate-dependent aminotransferase family. Histidinol-phosphate aminotransferase subfamily. As to quaternary structure, homodimer. Pyridoxal 5'-phosphate serves as cofactor.

The catalysed reaction is L-histidinol phosphate + 2-oxoglutarate = 3-(imidazol-4-yl)-2-oxopropyl phosphate + L-glutamate. It functions in the pathway amino-acid biosynthesis; L-histidine biosynthesis; L-histidine from 5-phospho-alpha-D-ribose 1-diphosphate: step 7/9. In Lactococcus lactis subsp. cremoris (strain SK11), this protein is Histidinol-phosphate aminotransferase.